Consider the following 395-residue polypeptide: Multidrug resistance protein MdtL (395 aa).

12 helical membrane passes run 4–24 (FLLC…MYLV), 42–62 (IAFS…GKIA), 69–89 (PVAI…SRAS), 93–113 (LFLS…VVAF), 131–151 (LLNG…HLIM), 158–178 (SLFY…LFIL), 217–237 (VSVI…VMGF), 247–267 (ALTA…LGLF), 271–291 (TLML…SLAH), 295–315 (VTLF…GVAM), 333–353 (LGIA…ILGI), and 358–378 (MLIG…FSVA).

Belongs to the major facilitator superfamily. DHA1 family. MdtL (TC 2.A.1.2.22) subfamily.

The protein resides in the cell inner membrane. This chain is Multidrug resistance protein MdtL, found in Salmonella heidelberg (strain SL476).